Reading from the N-terminus, the 378-residue chain is Queuine tRNA-ribosyltransferase (378 aa).

The active-site Proton acceptor is Asp93. Substrate is bound by residues 93 to 97, Asp147, Gln189, and Gly216; that span reads DSGGF. The tract at residues 247–253 is RNA binding; it reads GVGTFRE. Asp266 acts as the Nucleophile in catalysis. The segment at 271–275 is RNA binding; important for wobble base 34 recognition; sequence TRVAR. Zn(2+) is bound by residues Cys308, Cys310, Cys313, and His339.

This sequence belongs to the queuine tRNA-ribosyltransferase family. Homodimer. Within each dimer, one monomer is responsible for RNA recognition and catalysis, while the other monomer binds to the replacement base PreQ1. The cofactor is Zn(2+).

The enzyme catalyses 7-aminomethyl-7-carbaguanine + guanosine(34) in tRNA = 7-aminomethyl-7-carbaguanosine(34) in tRNA + guanine. Its pathway is tRNA modification; tRNA-queuosine biosynthesis. In terms of biological role, catalyzes the base-exchange of a guanine (G) residue with the queuine precursor 7-aminomethyl-7-deazaguanine (PreQ1) at position 34 (anticodon wobble position) in tRNAs with GU(N) anticodons (tRNA-Asp, -Asn, -His and -Tyr). Catalysis occurs through a double-displacement mechanism. The nucleophile active site attacks the C1' of nucleotide 34 to detach the guanine base from the RNA, forming a covalent enzyme-RNA intermediate. The proton acceptor active site deprotonates the incoming PreQ1, allowing a nucleophilic attack on the C1' of the ribose to form the product. After dissociation, two additional enzymatic reactions on the tRNA convert PreQ1 to queuine (Q), resulting in the hypermodified nucleoside queuosine (7-(((4,5-cis-dihydroxy-2-cyclopenten-1-yl)amino)methyl)-7-deazaguanosine). The chain is Queuine tRNA-ribosyltransferase from Gloeobacter violaceus (strain ATCC 29082 / PCC 7421).